The sequence spans 137 residues: MNALRGWLAALGSVLLASAAQLGMRWGMSRLPLPEAWAGQTPERAALLAVALAVAAYAASLLCWLAALRHLPLGRAYSLLSASYALVYLLAASLPAFDETFSTSKTLGVGLVVLGVLTVNARRTAAAPAHHPSRKAP.

Residues 1–3 lie on the Cytoplasmic side of the membrane; sequence MNA. Residues 4 to 24 form a helical membrane-spanning segment; the sequence is LRGWLAALGSVLLASAAQLGM. The Periplasmic portion of the chain corresponds to 25-44; the sequence is RWGMSRLPLPEAWAGQTPER. Residues 45–65 form a helical membrane-spanning segment; that stretch reads AALLAVALAVAAYAASLLCWL. Residues 66–76 lie on the Cytoplasmic side of the membrane; it reads AALRHLPLGRA. A helical transmembrane segment spans residues 77-97; sequence YSLLSASYALVYLLAASLPAF. Residues 98–100 are Periplasmic-facing; the sequence is DET. The helical transmembrane segment at 101–121 threads the bilayer; sequence FSTSKTLGVGLVVLGVLTVNA. Residues 122–137 lie on the Cytoplasmic side of the membrane; sequence RRTAAAPAHHPSRKAP.

It belongs to the ArnF family. As to quaternary structure, heterodimer of ArnE and ArnF.

The protein resides in the cell inner membrane. It participates in bacterial outer membrane biogenesis; lipopolysaccharide biosynthesis. In terms of biological role, translocates 4-amino-4-deoxy-L-arabinose-phosphoundecaprenol (alpha-L-Ara4N-phosphoundecaprenol) from the cytoplasmic to the periplasmic side of the inner membrane. The sequence is that of Probable 4-amino-4-deoxy-L-arabinose-phosphoundecaprenol flippase subunit ArnF from Pseudomonas aeruginosa (strain ATCC 15692 / DSM 22644 / CIP 104116 / JCM 14847 / LMG 12228 / 1C / PRS 101 / PAO1).